The sequence spans 142 residues: Transcription antitermination protein NusB (142 aa).

This sequence belongs to the NusB family.

Involved in transcription antitermination. Required for transcription of ribosomal RNA (rRNA) genes. Binds specifically to the boxA antiterminator sequence of the ribosomal RNA (rrn) operons. The polypeptide is Transcription antitermination protein NusB (Actinobacillus succinogenes (strain ATCC 55618 / DSM 22257 / CCUG 43843 / 130Z)).